We begin with the raw amino-acid sequence, 402 residues long: Phosphoglycerate kinase (402 aa).

Substrate contacts are provided by residues 24 to 26 (DFN), arginine 40, 63 to 66 (HFGR), arginine 122, and arginine 155. Residues lysine 206, glycine 297, glutamate 328, and 357 to 360 (GGDS) each bind ATP.

Belongs to the phosphoglycerate kinase family. As to quaternary structure, monomer.

Its subcellular location is the cytoplasm. It catalyses the reaction (2R)-3-phosphoglycerate + ATP = (2R)-3-phospho-glyceroyl phosphate + ADP. It functions in the pathway carbohydrate degradation; glycolysis; pyruvate from D-glyceraldehyde 3-phosphate: step 2/5. The chain is Phosphoglycerate kinase from Parasynechococcus marenigrum (strain WH8102).